The following is a 21-amino-acid chain: Nitrilase (21 aa).

This sequence belongs to the carbon-nitrogen hydrolase superfamily. Nitrilase family.

The catalysed reaction is a nitrile + 2 H2O = a carboxylate + NH4(+). Functionally, acts on many kinds of nitrile compounds such as aliphatic, aromatic, and heterocyclic mononitriles or dinitriles. Prefers S-(-)-2-(4'-isobutylphenyl)-propionitrile to R-(+)-2-(4'-isobutylphenyl)-propionitrile as the substrate. The protein is Nitrilase of Acinetobacter sp. (strain AK226).